Reading from the N-terminus, the 301-residue chain is MTLTLPAPAKLNLFLHITGRRDDGYHQLQTVFALLDHGDTLRFSPADTLSLQCHQEGGASDLPTDDSNLILQAARALQAHTGSSKGAAITLTKRLPMGGGVGGGSSDAATALLGLNAFWALGLTLQELAHIGLTLGADVPVFVFGKSAWAEGVGEKINPIILPNDAFLVVHPGIHVSTARIFGDQQLTRDTPISKLPASLETVLTREFHNDCEAVATQHFPEIGKTLDWLKQHTGNARMTGTGACCFSRLTGLQQGQQLLQQLPQHWTGFVARSCNTSPLHQILGEALAKFRETKNSGKPA.

Lys10 is an active-site residue. ATP is bound at residue 96–106 (PMGGGVGGGSS). Residue Asp138 is part of the active site.

This sequence belongs to the GHMP kinase family. IspE subfamily.

The catalysed reaction is 4-CDP-2-C-methyl-D-erythritol + ATP = 4-CDP-2-C-methyl-D-erythritol 2-phosphate + ADP + H(+). Its pathway is isoprenoid biosynthesis; isopentenyl diphosphate biosynthesis via DXP pathway; isopentenyl diphosphate from 1-deoxy-D-xylulose 5-phosphate: step 3/6. Functionally, catalyzes the phosphorylation of the position 2 hydroxy group of 4-diphosphocytidyl-2C-methyl-D-erythritol. This chain is 4-diphosphocytidyl-2-C-methyl-D-erythritol kinase, found in Alcanivorax borkumensis (strain ATCC 700651 / DSM 11573 / NCIMB 13689 / SK2).